The sequence spans 121 residues: Large ribosomal subunit protein bL12 (121 aa).

It belongs to the bacterial ribosomal protein bL12 family. As to quaternary structure, homodimer. Part of the ribosomal stalk of the 50S ribosomal subunit. Forms a multimeric L10(L12)X complex, where L10 forms an elongated spine to which 2 to 4 L12 dimers bind in a sequential fashion. Binds GTP-bound translation factors.

In terms of biological role, forms part of the ribosomal stalk which helps the ribosome interact with GTP-bound translation factors. Is thus essential for accurate translation. The chain is Large ribosomal subunit protein bL12 from Macrococcus caseolyticus (strain JCSC5402) (Macrococcoides caseolyticum).